The chain runs to 339 residues: GTPase Obg (339 aa).

The Obg domain occupies 1–159; it reads MKFVDEAFVR…RELKLELKLL (159 aa). The interval 127–147 is disordered; sequence NTHFKSSTNRAPRRTTSGEEG. The OBG-type G domain occupies 160-333; the sequence is ADVGLLGLPN…LCYDLMSFLE (174 aa). GTP contacts are provided by residues 166–173, 191–195, 213–216, 283–286, and 314–316; these read GLPNAGKS, FTTLY, DIPG, NKID, and SAI. 2 residues coordinate Mg(2+): serine 173 and threonine 193.

This sequence belongs to the TRAFAC class OBG-HflX-like GTPase superfamily. OBG GTPase family. Monomer. It depends on Mg(2+) as a cofactor.

Its subcellular location is the cytoplasm. Its function is as follows. An essential GTPase which binds GTP, GDP and possibly (p)ppGpp with moderate affinity, with high nucleotide exchange rates and a fairly low GTP hydrolysis rate. Plays a role in control of the cell cycle, stress response, ribosome biogenesis and in those bacteria that undergo differentiation, in morphogenesis control. This Coxiella burnetii (strain CbuK_Q154) (Coxiella burnetii (strain Q154)) protein is GTPase Obg.